We begin with the raw amino-acid sequence, 143 residues long: Ponticulin (143 aa).

Residues methionine 1–alanine 22 form the signal peptide. Residue asparagine 111 is glycosylated (N-linked (GlcNAc...) asparagine). The GPI-like-anchor amidated serine moiety is linked to residue serine 118. A propeptide spans serine 119–phenylalanine 143 (removed in mature form).

This sequence belongs to the ponticulin family. In terms of assembly, monomer. Disulfide bond(s) stabilize the native, actin-binding conformation of ponticulin. Post-translationally, the GPI-like-anchor contains a phosphoceramide group, rather than a phosphatidyl group.

It is found in the cell membrane. In terms of biological role, binds F-actin and nucleates actin assembly. Major high affinity link between the plasma membrane and the cortical actin network. The protein is Ponticulin (ponA) of Dictyostelium discoideum (Social amoeba).